A 1169-amino-acid chain; its full sequence is ATP-dependent helicase/deoxyribonuclease subunit B (1169 aa).

The region spanning 1-296 (MTLRIVSGRS…QHVEANFANM (296 aa)) is the UvrD-like helicase ATP-binding domain. 8–15 (GRSGTGKS) lines the ATP pocket. The region spanning 276 to 582 (YYTQRFQSED…EFSRIPPTLD (307 aa)) is the UvrD-like helicase C-terminal domain. Positions 804, 1129, 1132, and 1138 each coordinate [4Fe-4S] cluster.

It belongs to the helicase family. AddB/RexB type 1 subfamily. In terms of assembly, heterodimer of AddA and AddB. It depends on Mg(2+) as a cofactor. The cofactor is [4Fe-4S] cluster.

The heterodimer acts as both an ATP-dependent DNA helicase and an ATP-dependent, dual-direction single-stranded exonuclease. Recognizes the chi site generating a DNA molecule suitable for the initiation of homologous recombination. The AddB subunit has 5' -&gt; 3' nuclease activity but not helicase activity. This is ATP-dependent helicase/deoxyribonuclease subunit B from Lysinibacillus sphaericus (strain C3-41).